Here is a 190-residue protein sequence, read N- to C-terminus: Protein soem-1 (190 aa).

The 95-residue stretch at 96–190 (YMEQNMNRVE…LVLKNQLKPV (95 aa)) folds into the SH2 domain.

In terms of assembly, interacts with abl-1. Expressed in PQR, but not AQR, Q neuroblast descendents.

Its function is as follows. Functions downstream of migratory protein mig-13 and may play a role in the control of Q neuroblast migration during larval development. In Caenorhabditis elegans, this protein is Protein soem-1.